Here is a 224-residue protein sequence, read N- to C-terminus: Cytochrome c oxidase subunit 2 (224 aa).

Residues 1 to 26 (MSTWGQMNLMDPASPIQIEMMLFHDH) are Mitochondrial intermembrane-facing. A helical transmembrane segment spans residues 27–48 (AMAILIGIFTLVSCLGVKLCFN). The Mitochondrial matrix portion of the chain corresponds to 49 to 62 (TLSTRTMHEAQLLE). Residues 63–82 (TLWTILPAFLLVWLALPSLR) form a helical membrane-spanning segment. Topologically, residues 83–224 (LLYLLDEQSS…DVKDFINMCN (142 aa)) are mitochondrial intermembrane. Cu cation contacts are provided by His-161, Cys-196, Glu-198, Cys-200, His-204, and Met-207. Glu-198 provides a ligand contact to Mg(2+).

The protein belongs to the cytochrome c oxidase subunit 2 family. As to quaternary structure, component of the cytochrome c oxidase (complex IV, CIV), a multisubunit enzyme composed of a catalytic core of 3 subunits and several supernumerary subunits. The complex exists as a monomer or a dimer and forms supercomplexes (SCs) in the inner mitochondrial membrane with ubiquinol-cytochrome c oxidoreductase (cytochrome b-c1 complex, complex III, CIII). Requires Cu cation as cofactor.

The protein localises to the mitochondrion inner membrane. It carries out the reaction 4 Fe(II)-[cytochrome c] + O2 + 8 H(+)(in) = 4 Fe(III)-[cytochrome c] + 2 H2O + 4 H(+)(out). In terms of biological role, component of the cytochrome c oxidase, the last enzyme in the mitochondrial electron transport chain which drives oxidative phosphorylation. The respiratory chain contains 3 multisubunit complexes succinate dehydrogenase (complex II, CII), ubiquinol-cytochrome c oxidoreductase (cytochrome b-c1 complex, complex III, CIII) and cytochrome c oxidase (complex IV, CIV), that cooperate to transfer electrons derived from NADH and succinate to molecular oxygen, creating an electrochemical gradient over the inner membrane that drives transmembrane transport and the ATP synthase. Cytochrome c oxidase is the component of the respiratory chain that catalyzes the reduction of oxygen to water. Electrons originating from reduced cytochrome c in the intermembrane space (IMS) are transferred via the dinuclear copper A center (CU(A)) of subunit 2 and heme A of subunit 1 to the active site in subunit 1, a binuclear center (BNC) formed by heme A3 and copper B (CU(B)). The BNC reduces molecular oxygen to 2 water molecules using 4 electrons from cytochrome c in the IMS and 4 protons from the mitochondrial matrix. The sequence is that of Cytochrome c oxidase subunit 2 (COII) from Albinaria turrita (Door snail).